A 619-amino-acid chain; its full sequence is Laccase (619 aa).

The first 21 residues, methionine 1–glycine 21, serve as a signal peptide directing secretion. The propeptide occupies alanine 22 to glycine 49. An intrachain disulfide couples cysteine 55 to cysteine 63. 2 Plastocyanin-like domains span residues threonine 84–asparagine 207 and valine 216–asparagine 373. A glycan (N-linked (GlcNAc...) asparagine) is linked at asparagine 139. Residues histidine 144, histidine 146, histidine 189, and histidine 191 each coordinate Cu cation. Intrachain disulfides connect cysteine 165/cysteine 586 and cysteine 349/cysteine 383. Asparagine 282, asparagine 295, and asparagine 340 each carry an N-linked (GlcNAc...) asparagine glycan. 2 N-linked (GlcNAc...) asparagine glycosylation sites follow: asparagine 422 and asparagine 444. In terms of domain architecture, Plastocyanin-like 3 spans asparagine 431–arginine 566. The Cu cation site is built by histidine 477, histidine 480, histidine 482, histidine 548, cysteine 549, histidine 550, and histidine 554. Residues arginine 607–tryptophan 619 constitute a propeptide that is removed on maturation.

It belongs to the multicopper oxidase family. Cu cation is required as a cofactor.

Its subcellular location is the secreted. The catalysed reaction is 4 hydroquinone + O2 = 4 benzosemiquinone + 2 H2O. Functionally, lignin degradation and detoxification of lignin-derived products. In Neurospora crassa (strain ATCC 24698 / 74-OR23-1A / CBS 708.71 / DSM 1257 / FGSC 987), this protein is Laccase (lacc).